The primary structure comprises 443 residues: Ribosomal protein uS12 methylthiotransferase RimO (443 aa).

Residues 1–114 enclose the MTTase N-terminal domain; that stretch reads MGFVSLGCPK…VMQAVHTHLP (114 aa). The [4Fe-4S] cluster site is built by C8, C44, C73, C145, C149, and C152. A Radical SAM core domain is found at 131 to 372; that stretch reads LTPKHYAYLK…MEVAEEVSAR (242 aa). Positions 375 to 443 constitute a TRAM domain; that stretch reads QRKVGQTLRV…ADGHDLWGAV (69 aa).

It belongs to the methylthiotransferase family. RimO subfamily. The cofactor is [4Fe-4S] cluster.

It is found in the cytoplasm. It catalyses the reaction L-aspartate(89)-[ribosomal protein uS12]-hydrogen + (sulfur carrier)-SH + AH2 + 2 S-adenosyl-L-methionine = 3-methylsulfanyl-L-aspartate(89)-[ribosomal protein uS12]-hydrogen + (sulfur carrier)-H + 5'-deoxyadenosine + L-methionine + A + S-adenosyl-L-homocysteine + 2 H(+). In terms of biological role, catalyzes the methylthiolation of an aspartic acid residue of ribosomal protein uS12. This chain is Ribosomal protein uS12 methylthiotransferase RimO, found in Cupriavidus necator (strain ATCC 17699 / DSM 428 / KCTC 22496 / NCIMB 10442 / H16 / Stanier 337) (Ralstonia eutropha).